The primary structure comprises 78 residues: Acyl carrier protein (78 aa).

The Carrier domain occupies 1 to 77 (MSEVEKKVID…DAIDYIEKNL (77 aa)). Serine 37 is modified (O-(pantetheine 4'-phosphoryl)serine).

This sequence belongs to the acyl carrier protein (ACP) family. Post-translationally, 4'-phosphopantetheine is transferred from CoA to a specific serine of apo-ACP by AcpS. This modification is essential for activity because fatty acids are bound in thioester linkage to the sulfhydryl of the prosthetic group.

It localises to the cytoplasm. Its pathway is lipid metabolism; fatty acid biosynthesis. Functionally, carrier of the growing fatty acid chain in fatty acid biosynthesis. This is Acyl carrier protein from Porphyromonas gingivalis (strain ATCC 33277 / DSM 20709 / CIP 103683 / JCM 12257 / NCTC 11834 / 2561).